The following is a 92-amino-acid chain: Small ribosomal subunit protein uS19 (92 aa).

Belongs to the universal ribosomal protein uS19 family.

In terms of biological role, protein S19 forms a complex with S13 that binds strongly to the 16S ribosomal RNA. This chain is Small ribosomal subunit protein uS19, found in Sulfurovum sp. (strain NBC37-1).